Reading from the N-terminus, the 322-residue chain is Large ribosomal subunit protein uL29m (322 aa).

Residues 1-44 are disordered; sequence MLNVQRGLHTTVRLSARTKYTKPKPKPQARVIKSEPSQVTHHDN.

The protein belongs to the universal ribosomal protein uL29 family. In terms of assembly, component of the mitochondrial large ribosomal subunit. Mature mitochondrial ribosomes consist of a small (37S) and a large (54S) subunit. The 37S subunit contains at least 33 different proteins and 1 molecule of RNA (15S). The 54S subunit contains at least 45 different proteins and 1 molecule of RNA (21S).

Its subcellular location is the mitochondrion. The sequence is that of Large ribosomal subunit protein uL29m (MRPL4) from Vanderwaltozyma polyspora (strain ATCC 22028 / DSM 70294 / BCRC 21397 / CBS 2163 / NBRC 10782 / NRRL Y-8283 / UCD 57-17) (Kluyveromyces polysporus).